We begin with the raw amino-acid sequence, 977 residues long: Ephrin type-A receptor 1 (977 aa).

The N-terminal stretch at 1 to 26 is a signal peptide; it reads MERRWPLGLALLLLLLCAPLPPGARA. At 27–548 the chain is on the extracellular side; sequence EEVTLMDTST…PVSRSLTGGE (522 aa). One can recognise an Eph LBD domain in the interval 28-210; that stretch reads EVTLMDTSTA…FYQRCAETVH (183 aa). Fibronectin type-III domains lie at 333–446 and 448–539; these read PPSA…MGHA and SLSG…TSPP. N-linked (GlcNAc...) asparagine glycans are attached at residues Asn415 and Asn479. A helical membrane pass occupies residues 549–569; that stretch reads IVAVIFGLLLGIALLIGIYVF. Residues 570 to 977 are Cytoplasmic-facing; that stretch reads RSRRGQRQRQ…ILCSIQGFKD (408 aa). Phosphotyrosine; by autocatalysis is present on residues Tyr600 and Tyr606. Residues 625-885 form the Protein kinase domain; sequence LIVDTVIGEG…QLQAHLEQLL (261 aa). Residues 631–639 and Lys657 contribute to the ATP site; that span reads IGEGEFGEV. The active-site Proton acceptor is the Asp750. Residue Tyr782 is modified to Phosphotyrosine; by autocatalysis. Residues Ser907 and Ser911 each carry the phosphoserine modification. The 64-residue stretch at 914–977 folds into the SAM domain; it reads IPYRSVSEWL…ILCSIQGFKD (64 aa). The short motif at 975–977 is the PDZ-binding element; that stretch reads FKD.

It belongs to the protein kinase superfamily. Tyr protein kinase family. Ephrin receptor subfamily. As to quaternary structure, homodimer. Forms a signaling complex with LCK; PTK2B/PYK2 and PI3-kinase upon activation by EFNA1; regulates T-lymphocytes migration. Interacts (via SAM domain) with ILK (via ANK repeats); stimulated by EFNA1 but independent of the kinase activity of EPHA1. Interacts (kinase activity-dependent) with PTK2/FAK1. Post-translationally, phosphorylated. Autophosphorylation is stimulated by its ligand EFNA1. Ubiquitinated. As to expression, preferentially expressed in epithelial cells including skin, kidney, liver and thymus. Expressed in myogenic progenitor cells.

The protein resides in the cell membrane. The catalysed reaction is L-tyrosyl-[protein] + ATP = O-phospho-L-tyrosyl-[protein] + ADP + H(+). Its function is as follows. Receptor tyrosine kinase which binds promiscuously membrane-bound ephrin-A family ligands residing on adjacent cells, leading to contact-dependent bidirectional signaling into neighboring cells. The signaling pathway downstream of the receptor is referred to as forward signaling while the signaling pathway downstream of the ephrin ligand is referred to as reverse signaling. Binds with a low affinity EFNA3 and EFNA4 and with a high affinity to EFNA1 which most probably constitutes its cognate/functional ligand. Upon activation by EFNA1 induces cell attachment to the extracellular matrix inhibiting cell spreading and motility through regulation of ILK and downstream RHOA and RAC. Also plays a role in angiogenesis and regulates cell proliferation. May play a role in apoptosis. This is Ephrin type-A receptor 1 (Epha1) from Mus musculus (Mouse).